Reading from the N-terminus, the 63-residue chain is Large ribosomal subunit protein bL28 (63 aa).

It belongs to the bacterial ribosomal protein bL28 family.

This chain is Large ribosomal subunit protein bL28, found in Desulforudis audaxviator (strain MP104C).